Here is a 157-residue protein sequence, read N- to C-terminus: Small ribosomal subunit protein uS7 (157 aa).

It belongs to the universal ribosomal protein uS7 family. As to quaternary structure, part of the 30S ribosomal subunit. Contacts proteins S9 and S11.

Functionally, one of the primary rRNA binding proteins, it binds directly to 16S rRNA where it nucleates assembly of the head domain of the 30S subunit. Is located at the subunit interface close to the decoding center, probably blocks exit of the E-site tRNA. In Salinibacter ruber (strain DSM 13855 / M31), this protein is Small ribosomal subunit protein uS7.